A 288-amino-acid polypeptide reads, in one-letter code: Energy-coupling factor transporter ATP-binding protein EcfA3 (288 aa).

Positions 3–245 constitute an ABC transporter domain; the sequence is INFRNVSFSY…ESYLRKEKLR (243 aa). Residue 40–47 participates in ATP binding; the sequence is GHTGSGKS.

It belongs to the ABC transporter superfamily. Energy-coupling factor EcfA family. As to quaternary structure, forms a stable energy-coupling factor (ECF) transporter complex composed of 2 membrane-embedded substrate-binding proteins (S component), 2 ATP-binding proteins (A component) and 2 transmembrane proteins (T component).

The protein localises to the cell membrane. In terms of biological role, ATP-binding (A) component of a common energy-coupling factor (ECF) ABC-transporter complex. Unlike classic ABC transporters this ECF transporter provides the energy necessary to transport a number of different substrates. This Oenococcus oeni (strain ATCC BAA-331 / PSU-1) protein is Energy-coupling factor transporter ATP-binding protein EcfA3.